The following is a 557-amino-acid chain: BZIP-type transcription factor MBZ1 (557 aa).

The span at 171–194 (AKAQAQQRQQQQQQQLIQQTQRQT) shows a compositional bias: low complexity. Disordered regions lie at residues 171 to 209 (AKAQ…TDPI) and 221 to 273 (MRAK…RQLR). Positions 229–240 (EPESQSVLNNLP) are enriched in polar residues. The span at 254–271 (RLLASEEGKKLSSKERRQ) shows a compositional bias: basic and acidic residues. The bZIP domain occupies 264-327 (LSSKERRQLR…KRLSDLTRML (64 aa)). Residues 267–286 (KERRQLRNKVSARAFRSRRK) are basic motif. Positions 289 to 296 (ISQLEAEI) are leucine-zipper. The tract at residues 344-364 (PTGLPQGSPVKIEQNPQQEQN) is disordered.

Its subcellular location is the nucleus. BZIP-type transcription factor that functions as either an activator or a suppressor, and which contributes to the regulation of fungal growth, conidiation, cell wall integrity, and virulence. Plays a key role in virulence against insects by mediating cell wall integrity, cell surface hydrophobicity, and adherence to hydrophobic surfaces. Exhibits negative regulation of subtilisin proteases, but positive control of an adhesin gene. The polypeptide is BZIP-type transcription factor MBZ1 (Metarhizium robertsii (strain ARSEF 23 / ATCC MYA-3075) (Metarhizium anisopliae (strain ARSEF 23))).